Reading from the N-terminus, the 246-residue chain is Probable transcriptional regulatory protein AHA_1522 (246 aa).

The protein belongs to the TACO1 family.

The protein localises to the cytoplasm. The chain is Probable transcriptional regulatory protein AHA_1522 from Aeromonas hydrophila subsp. hydrophila (strain ATCC 7966 / DSM 30187 / BCRC 13018 / CCUG 14551 / JCM 1027 / KCTC 2358 / NCIMB 9240 / NCTC 8049).